Reading from the N-terminus, the 223-residue chain is MQLTLTLSGSSMQLLLLVSNLLLWENMASKPTVLVSTEDLYHRLVEQSHNTFIKAADVYREFDINFAKRSWMKDRILPLCHTASIHVPENREEVHEIKTEDLLRSIINISVSWKEPLKHFVSAVTDLPGASASMRKKAVDMKDKNLIILEGLQKIFNRTQTKVEENENFDYPAWSGLKDLQSSDEDTHLFAIYNLCRCFKSDIHKIDTYLKVLRCRVVFKNEC.

The N-terminal stretch at methionine 1–alanine 28 is a signal peptide. Disulfide bonds link cysteine 80–cysteine 198 and cysteine 215–cysteine 223. N-linked (GlcNAc...) asparagine glycans are attached at residues asparagine 108 and asparagine 157.

It belongs to the somatotropin/prolactin family. In terms of processing, N-glycosylated.

It is found in the secreted. The chain is Prolactin-3D4 (Prl3d4) from Rattus norvegicus (Rat).